The primary structure comprises 339 residues: Anthranilate phosphoribosyltransferase (339 aa).

Residues Gly82, 85-86 (GD), Thr90, 92-95 (NIST), and 110-118 (KHGNRAVSS) each bind 5-phospho-alpha-D-ribose 1-diphosphate. Gly82 is a binding site for anthranilate. Ser94 is a binding site for Mg(2+). Anthranilate contacts are provided by Asn113 and Arg168. Positions 227 and 228 each coordinate Mg(2+).

It belongs to the anthranilate phosphoribosyltransferase family. As to quaternary structure, homodimer. Requires Mg(2+) as cofactor.

The enzyme catalyses N-(5-phospho-beta-D-ribosyl)anthranilate + diphosphate = 5-phospho-alpha-D-ribose 1-diphosphate + anthranilate. Its pathway is amino-acid biosynthesis; L-tryptophan biosynthesis; L-tryptophan from chorismate: step 2/5. In terms of biological role, catalyzes the transfer of the phosphoribosyl group of 5-phosphorylribose-1-pyrophosphate (PRPP) to anthranilate to yield N-(5'-phosphoribosyl)-anthranilate (PRA). The sequence is that of Anthranilate phosphoribosyltransferase from Clostridium beijerinckii (strain ATCC 51743 / NCIMB 8052) (Clostridium acetobutylicum).